The primary structure comprises 245 residues: Dehydrogenase/reductase SDR family member 6 (245 aa).

Residues 16–18, Asp37, and Asp58 contribute to the NAD(+) site; that span reads QGI. Arg144 is a binding site for substrate. Tyr147 functions as the Proton acceptor in the catalytic mechanism. Residues Lys151 and 180–184 contribute to the NAD(+) site; that span reads VDTPS. Residues Arg188 and Arg205 each coordinate substrate.

This sequence belongs to the short-chain dehydrogenases/reductases (SDR) family. Homotetramer.

It is found in the cytoplasm. The enzyme catalyses cis-4-hydroxy-L-proline + NAD(+) = 4-oxo-L-proline + NADH + H(+). It catalyses the reaction (R)-3-hydroxybutanoate + NAD(+) = acetoacetate + NADH + H(+). It participates in amino-acid metabolism. The protein operates within siderophore biosynthesis. Its function is as follows. NAD(H)-dependent dehydrogenase/reductase with a preference for cyclic substrates. Catalyzes stereoselective conversion of 4-oxo-L-proline to cis-4-hydroxy-L-proline, likely a detoxification mechanism for ketoprolines. Mediates the formation of 2,5-dihydroxybenzoate (2,5-DHBA), a siderophore that chelates free cytoplasmic iron, thereby regulating iron transport and homeostasis while protecting cells against free radical-induced oxidative stress. The iron-siderophore complex is imported into mitochondria, providing an iron source for mitochondrial metabolic processes in particular heme synthesis. May act as a 3-hydroxybutyrate dehydrogenase. In Xenopus laevis (African clawed frog), this protein is Dehydrogenase/reductase SDR family member 6 (bdh2).